We begin with the raw amino-acid sequence, 252 residues long: MTDAILQVSDLSVYYNKKKALNSVSLSFQPKEITALIGPSGSGKSTLLKSLNRMGDLNPEVTTTGSVVYNGHNIYSPRTDTVELRKEIGMVFQQPNPFPMTIYENVVYGLRINGIKDKQVLDEAVEKALQGASIWDEVKDRLYDSAIGLSGGQQQRVCVARVLATSPKIILLDEPTSALDPISAGKIEETLYGLKDKYTMLLVTRSMQQASRISDKTGFFLDGDLIEFNDTKQMFLDPQHKETEDYITGKFG.

An ABC transporter domain is found at 6 to 247 (LQVSDLSVYY…PQHKETEDYI (242 aa)). 38-45 (GPSGSGKS) contributes to the ATP binding site.

It belongs to the ABC transporter superfamily. Phosphate importer (TC 3.A.1.7) family. In terms of assembly, the complex is composed of two ATP-binding proteins (PstB), two transmembrane proteins (PstC and PstA) and a solute-binding protein (PstS).

It localises to the cell membrane. The catalysed reaction is phosphate(out) + ATP + H2O = ADP + 2 phosphate(in) + H(+). In terms of biological role, part of the ABC transporter complex PstSACB involved in phosphate import. Responsible for energy coupling to the transport system. In Streptococcus pneumoniae (strain ATCC BAA-255 / R6), this protein is Phosphate import ATP-binding protein PstB 1.